We begin with the raw amino-acid sequence, 317 residues long: EMP1 trafficking protein-7 (317 aa).

A disordered region spans residues 1-32 (MAKDSQKNLNVSNNNNVQCTMGRSSQNINKSD). A compositionally biased stretch (low complexity) spans 8–17 (NLNVSNNNNV). The segment covering 18–30 (QCTMGRSSQNINK) has biased composition (polar residues). The PEXEL motif motif lies at 86–90 (KSLAE). The helical transmembrane segment at 230–250 (VLNALLPFIFIAFVYCTITML) threads the bilayer. The tract at residues 265–317 (KILKMHYDYKHKENNNNNNNNNNNNNNNNNNNNNNNNNNNNNNNNNNKKSKKN) is essential for its function. The segment at 277-317 (ENNNNNNNNNNNNNNNNNNNNNNNNNNNNNNNNNNKKSKKN) is disordered. Residues 279–311 (NNNNNNNNNNNNNNNNNNNNNNNNNNNNNNNNN) show a composition bias toward low complexity.

In terms of assembly, may interact with MESA. May interact with J-dot compartment protein PF3D7_0801000.

The protein localises to the host cytoplasm. It localises to the vesicle. Its subcellular location is the membrane. Functionally, during the asexual blood stage, plays an essential role in the recruitment and/or formation of EMP1-containing vesicles at the Maurer's clefts and their subsequent transfer to the host erythrocyte cell membrane. The polypeptide is EMP1 trafficking protein-7 (Plasmodium falciparum (isolate 3D7)).